The following is a 125-amino-acid chain: Small ribosomal subunit protein uS13 (125 aa).

A disordered region spans residues 90–125; it reads QRHRKGLPVRGQRTKTNARTRKGPKRTVAGKKKATK.

It belongs to the universal ribosomal protein uS13 family. Part of the 30S ribosomal subunit. Forms a loose heterodimer with protein S19. Forms two bridges to the 50S subunit in the 70S ribosome.

Its function is as follows. Located at the top of the head of the 30S subunit, it contacts several helices of the 16S rRNA. In the 70S ribosome it contacts the 23S rRNA (bridge B1a) and protein L5 of the 50S subunit (bridge B1b), connecting the 2 subunits; these bridges are implicated in subunit movement. Contacts the tRNAs in the A and P-sites. The sequence is that of Small ribosomal subunit protein uS13 from Bifidobacterium longum subsp. infantis (strain ATCC 15697 / DSM 20088 / JCM 1222 / NCTC 11817 / S12).